Here is a 764-residue protein sequence, read N- to C-terminus: 5-methyltetrahydropteroyltriglutamate--homocysteine methyltransferase (764 aa).

Residues 16–19 (RELK) and K121 contribute to the 5-methyltetrahydropteroyltri-L-glutamate site. L-homocysteine-binding positions include 440–442 (IGS) and E493. Residues 440 to 442 (IGS) and E493 each bind L-methionine. 5-methyltetrahydropteroyltri-L-glutamate contacts are provided by residues 524-525 (RC) and W570. D608 lines the L-homocysteine pocket. D608 serves as a coordination point for L-methionine. E614 serves as a coordination point for 5-methyltetrahydropteroyltri-L-glutamate. 3 residues coordinate Zn(2+): H650, C652, and E674. H703 (proton donor) is an active-site residue. C735 provides a ligand contact to Zn(2+).

Belongs to the vitamin-B12 independent methionine synthase family. The cofactor is Zn(2+).

The catalysed reaction is 5-methyltetrahydropteroyltri-L-glutamate + L-homocysteine = tetrahydropteroyltri-L-glutamate + L-methionine. It functions in the pathway amino-acid biosynthesis; L-methionine biosynthesis via de novo pathway; L-methionine from L-homocysteine (MetE route): step 1/1. In terms of biological role, catalyzes the transfer of a methyl group from 5-methyltetrahydrofolate to homocysteine resulting in methionine formation. In Burkholderia cenocepacia (strain HI2424), this protein is 5-methyltetrahydropteroyltriglutamate--homocysteine methyltransferase.